We begin with the raw amino-acid sequence, 634 residues long: Phosphatase and actin regulator 2 (634 aa).

Disordered regions lie at residues 1 to 32 (MDNA…KRKG), 84 to 344 (LPDQ…PLED), 412 to 471 (PQLL…ALAS), and 485 to 508 (NRPS…ERQE). A lipid anchor (N-myristoyl glycine) is attached at Asp2. The span at 13–26 (IANSDGPTAGSQTP) shows a compositional bias: polar residues. Ser16 bears the Phosphoserine mark. Phosphothreonine is present on Thr25. One copy of the RPEL 1 repeat lies at 60 to 85 (AVLERKISTRQSREELIRRGVLKELP). Basic and acidic residues-rich tracts occupy residues 108–120 (ESTR…KSEE) and 137–147 (EDKKENTENHS). Over residues 153 to 162 (PALPPSAPPK) the composition is skewed to pro residues. 2 stretches are compositionally biased toward low complexity: residues 231–247 (GSKA…SSRP) and 276–290 (TSHL…GTSD). Over residues 291 to 304 (LKGEPAETRVESFK) the composition is skewed to basic and acidic residues. Over residues 324–341 (VPPPPVAPAPSPLAPPLP) the composition is skewed to pro residues. Phosphoserine is present on Ser423. A compositionally biased stretch (acidic residues) spans 452–464 (TDDEDEDEDEDGS). RPEL repeat units follow at residues 477 to 502 (DTLA…QRTS), 515 to 540 (TKLV…KQKN), and 553 to 578 (RRLS…RFNE). Basic and acidic residues predominate over residues 488–508 (SKKELEDKNILQRTSEEERQE). Phosphoserine is present on residues Ser522 and Ser560.

This sequence belongs to the phosphatase and actin regulator family. In terms of assembly, binds PPP1CA and actin.

It is found in the membrane. The chain is Phosphatase and actin regulator 2 (PHACTR2) from Homo sapiens (Human).